The primary structure comprises 269 residues: MDCYAEELVVPNYQESSSETYPSTGMWGGWSMSSPEAAEKCFDYDGFNGEGMMYSQMSMRTSEEEEESKRSKAFYGASSLHDFEGIEQMDDMFLSSILEDVPEDDGDVHRATSSNNSVGSSSMYGGGREVPMFHCHDMSFKEEAPFTISDLSEENMLDSNYGDELSSEEFVLQDLQRASQKLTDETRKCFRDTFYRLARSSQDKSDSVSPNSEELLMQTSRYDYGDGNRFSREEEIESETNSIDRAVANLTFNKMESNISNFPLSERVQ.

In terms of assembly, interacts with REV8.

In terms of biological role, probable transcriptional coactivator. In Arabidopsis thaliana (Mouse-ear cress), this protein is Protein LNK3.